The following is a 212-amino-acid chain: MAETKQLGILRFIYEKQNEKGYPPTVREIGEAVGLSSTSTVHGHIDRLEKHGLLHKDPTKPRAIEITEKGLRALGVPETPGKVPIIGLVTAGMPILAVEQAATEFLPIPSDLERFDGDLFVLRVSGTSMINIGILDGDMVFVRKQDYADNGDIVVAMTTDFGNGEGEATVKRFFKESNHYRLQPENDTMAPIIVKNVSILGKVVGLYRNSIY.

Positions 26–46 form a DNA-binding region, H-T-H motif; the sequence is VREIGEAVGLSSTSTVHGHID. Residues Ser128 and Lys171 each act as for autocatalytic cleavage activity in the active site.

The protein belongs to the peptidase S24 family. Homodimer.

The enzyme catalyses Hydrolysis of Ala-|-Gly bond in repressor LexA.. Functionally, represses a number of genes involved in the response to DNA damage (SOS response), including recA and lexA. In the presence of single-stranded DNA, RecA interacts with LexA causing an autocatalytic cleavage which disrupts the DNA-binding part of LexA, leading to derepression of the SOS regulon and eventually DNA repair. The chain is LexA repressor from Oenococcus oeni (strain ATCC BAA-331 / PSU-1).